The sequence spans 298 residues: 4-hydroxy-tetrahydrodipicolinate synthase (298 aa).

Residue Thr-51 participates in pyruvate binding. The Proton donor/acceptor role is filled by Tyr-139. The Schiff-base intermediate with substrate role is filled by Lys-167. Residue Ile-209 coordinates pyruvate.

Belongs to the DapA family. Homotetramer; dimer of dimers.

Its subcellular location is the cytoplasm. The catalysed reaction is L-aspartate 4-semialdehyde + pyruvate = (2S,4S)-4-hydroxy-2,3,4,5-tetrahydrodipicolinate + H2O + H(+). It functions in the pathway amino-acid biosynthesis; L-lysine biosynthesis via DAP pathway; (S)-tetrahydrodipicolinate from L-aspartate: step 3/4. Catalyzes the condensation of (S)-aspartate-beta-semialdehyde [(S)-ASA] and pyruvate to 4-hydroxy-tetrahydrodipicolinate (HTPA). The sequence is that of 4-hydroxy-tetrahydrodipicolinate synthase from Histophilus somni (strain 2336) (Haemophilus somnus).